The primary structure comprises 188 residues: GMP synthase [glutamine-hydrolyzing] subunit A (188 aa).

The region spanning 3–188 (PLYVVNNYGQ…FSICTGQNKG (186 aa)) is the Glutamine amidotransferase type-1 domain. Residue cysteine 75 is the Nucleophile of the active site. Catalysis depends on residues histidine 162 and glutamate 164.

As to quaternary structure, heterodimer composed of a glutamine amidotransferase subunit (A) and a GMP-binding subunit (B).

It catalyses the reaction XMP + L-glutamine + ATP + H2O = GMP + L-glutamate + AMP + diphosphate + 2 H(+). It participates in purine metabolism; GMP biosynthesis; GMP from XMP (L-Gln route): step 1/1. Its function is as follows. Catalyzes the synthesis of GMP from XMP. The chain is GMP synthase [glutamine-hydrolyzing] subunit A from Methanospirillum hungatei JF-1 (strain ATCC 27890 / DSM 864 / NBRC 100397 / JF-1).